A 306-amino-acid polypeptide reads, in one-letter code: Mitochondrial uncoupling protein 1 (306 aa).

3 Solcar repeats span residues Leu-9–Leu-102, Val-112–Thr-203, and Asp-212–Tyr-296. Transmembrane regions (helical) follow at residues Phe-15–Ala-35, Leu-71–Leu-91, Ile-118–Val-138, Thr-177–Tyr-197, Ile-218–Val-238, and Tyr-269–Thr-289.

The protein belongs to the mitochondrial carrier (TC 2.A.29) family. As to expression, widely expressed.

Its subcellular location is the mitochondrion inner membrane. Functionally, PUMPS are mitochondrial transporter proteins that create proton leaks across the inner mitochondrial membrane, thus uncoupling oxidative phosphorylation. This leads to a decrease in the efficiency of oxidative phosphorylation and an increase in heat production. Is involved in protecting plant cells against oxidative stress damage and maintaining the redox balance of the mitochondrial electron transport chain to facilitate photosynthetic metabolism. May play a regulatory role during photorespiration. The sequence is that of Mitochondrial uncoupling protein 1 (PUMP1) from Arabidopsis thaliana (Mouse-ear cress).